A 424-amino-acid polypeptide reads, in one-letter code: 5-methylthioadenosine/S-adenosylhomocysteine deaminase (424 aa).

Zn(2+) is bound by residues histidine 60 and histidine 62. Substrate-binding residues include glutamate 89 and histidine 181. Histidine 208 lines the Zn(2+) pocket. Substrate contacts are provided by glutamate 211 and aspartate 296. Aspartate 296 provides a ligand contact to Zn(2+).

This sequence belongs to the metallo-dependent hydrolases superfamily. MTA/SAH deaminase family. The cofactor is Zn(2+).

The enzyme catalyses S-adenosyl-L-homocysteine + H2O + H(+) = S-inosyl-L-homocysteine + NH4(+). The catalysed reaction is S-methyl-5'-thioadenosine + H2O + H(+) = S-methyl-5'-thioinosine + NH4(+). Catalyzes the deamination of 5-methylthioadenosine and S-adenosyl-L-homocysteine into 5-methylthioinosine and S-inosyl-L-homocysteine, respectively. Is also able to deaminate adenosine. This is 5-methylthioadenosine/S-adenosylhomocysteine deaminase from Thermococcus sibiricus (strain DSM 12597 / MM 739).